The following is a 438-amino-acid chain: ATP-dependent RNA helicase SUB2 (438 aa).

Acidic residues predominate over residues 1 to 19 (MSHEGEEDLLEYSDNEQEI). The segment at 1–44 (MSHEGEEDLLEYSDNEQEIQVDNTKATEVAGNGEEAADGKDGDK) is disordered. The short motif at 54-82 (TGFKDFLLKPELSRAIIDCGFEHPSEVQQ) is the Q motif element. The 176-residue stretch at 85-260 (IPQSIHGTDV…RRFLQNPLEI (176 aa)) folds into the Helicase ATP-binding domain. Residue 98–105 (AKSGLGKT) coordinates ATP. The DECD box signature appears at 207–210 (DECD). The Helicase C-terminal domain maps to 272-433 (GLQQYYIRLE…EFPEEGVDPS (162 aa)).

Belongs to the DEAD box helicase family. DECD subfamily.

It is found in the nucleus. It catalyses the reaction ATP + H2O = ADP + phosphate + H(+). Its function is as follows. ATP-binding RNA helicase involved in transcription elongation and required for the export of mRNA out of the nucleus. SUB2 also plays a role in pre-mRNA splicing and spliceosome assembly. May be involved in rDNA and telomeric silencing, and maintenance of genome integrity. The chain is ATP-dependent RNA helicase SUB2 (SUB2) from Eremothecium gossypii (strain ATCC 10895 / CBS 109.51 / FGSC 9923 / NRRL Y-1056) (Yeast).